Here is a 380-residue protein sequence, read N- to C-terminus: MAPSLKKIVLWSFLALPSPVNISIWWNIGSLLGLLLAMQIMTGIFLSLHYTPMMVSTFSSMVHIMRDVPGGWLVRASHANGASMFFMLMYAHIGRGVYYQSYILQPRTWLVGGNDFLLSMATAFLGYVLPWGQMSYWGATVITNLLSAVPYLGDSLVTWVWGCFSVNQATLNRFYSFHFLLPFVILVFVLVHLLLLHDKGSSNPLGNMSHVSKVSFHPYFTWKILWVFVLLCFLLYVLLCYITLMYLRTPKTFIEANPMVTPTHIQPEWYFLFAYAILRAIPSKIGGVVALAMSVLYLYTFPLALYSSAAATAYNFIGQLLFWGYVSLFFLLTWLGACPVEEPYISLALPLTVMFFVVPGLYMISSSYIIRSFQFLLSLK.

A run of 4 helical transmembrane segments spans residues 28-48, 72-93, 109-129, and 174-194; these read IGSL…FLSL, WLVR…YAHI, WLVG…GYVL, and FYSF…VHLL. Residues H78 and H92 each coordinate heme b. Residues H178 and H192 each contribute to the heme b site. H197 serves as a coordination point for a ubiquinone. Helical transmembrane passes span 222 to 243, 285 to 305, 317 to 337, and 344 to 364; these read WKIL…CYIT, IGGV…PLAL, IGQL…WLGA, and YISL…LYMI.

The protein belongs to the cytochrome b family. The main subunits of complex b-c1 are: cytochrome b, cytochrome c1 and the Rieske protein. Heme b is required as a cofactor.

It localises to the mitochondrion inner membrane. Component of the ubiquinol-cytochrome c reductase complex (complex III or cytochrome b-c1 complex) that is part of the mitochondrial respiratory chain. The b-c1 complex mediates electron transfer from ubiquinol to cytochrome c. Contributes to the generation of a proton gradient across the mitochondrial membrane that is then used for ATP synthesis. The protein is Cytochrome b (MT-CYB) of Cepaea nemoralis (Banded wood snail).